The primary structure comprises 408 residues: Snake venom 5'-nucleotidase (408 aa).

Zn(2+) contacts are provided by H54 and H77. 2 N-linked (GlcNAc...) asparagine glycosylation sites follow: N167 and N181. 2 disulfide bridges follow: C187-C192 and C199-C221. R188 is a binding site for AMP. Residues N224, R229, and F252 each coordinate AMP. C311 and C314 are disulfide-bonded. AMP-binding residues include F335 and D341. 2 propeptides (removed in mature form) span residues 385 to 388 (DGTL) and 385 to 408 (DGTLFQAQLFLTWGLCISLLFFIL).

It belongs to the 5'-nucleotidase family. As to quaternary structure, homodimer. Venom 5'-nucleotidases (or a part thereof) may be released into the venom via exosome-like vesicles. They may be attached via a GPI anchor to the membrane of these vesicles. Soluble forms of 5'-nucleotidase might be released by cleavage of the ectodomain in the exosome-like vesicles or venom gland cells. In terms of tissue distribution, expressed by the venom gland.

The protein resides in the membrane. The enzyme catalyses a ribonucleoside 5'-phosphate + H2O = a ribonucleoside + phosphate. It catalyses the reaction AMP + H2O = adenosine + phosphate. The catalysed reaction is GMP + H2O = guanosine + phosphate. It carries out the reaction ADP + H2O = AMP + phosphate + H(+). With respect to regulation, is potently inhibited by metal ions Fe(3+), Cu(2+) and Zn(2+). Is enhanced by Mn(2+). Ca(2+) and Mg(2+) have no effect. Hydrolyzes nucleotides into nucleosides. Prefers AMP as the substrate but also cleaves GMP and ADP. Does not affect AMP, cAMP and cGMP. Inhibits ADP- and collagen-induced platelet aggregation. Snake venom 5'-nucleotidases are widely distributed among venomous snake taxa, but there is a lack of information about their biological activities. They have been shown to inhibit platelet aggregation. This effect may be due to the liberation of inhibitory AMP or adenosine by its action on ADP released upon initiation of aggregation. Venom 5'-nucleotidases are also known to synergistically act in vivo with other toxins like ADPases, phospholipases, and disintegrins to exert a more pronounced anti-coagulant effect. The chain is Snake venom 5'-nucleotidase from Macrovipera lebetinus (Levantine viper).